A 257-amino-acid polypeptide reads, in one-letter code: Acetylglutamate kinase (257 aa).

Residues 43–44 (GG), R65, and N157 contribute to the substrate site. ATP is bound by residues 180 to 185 (DVSGIL) and 208 to 210 (IIT).

It belongs to the acetylglutamate kinase family. ArgB subfamily. Homodimer.

Its subcellular location is the cytoplasm. It catalyses the reaction N-acetyl-L-glutamate + ATP = N-acetyl-L-glutamyl 5-phosphate + ADP. It participates in amino-acid biosynthesis; L-arginine biosynthesis; N(2)-acetyl-L-ornithine from L-glutamate: step 2/4. Catalyzes the ATP-dependent phosphorylation of N-acetyl-L-glutamate. The polypeptide is Acetylglutamate kinase (Photorhabdus laumondii subsp. laumondii (strain DSM 15139 / CIP 105565 / TT01) (Photorhabdus luminescens subsp. laumondii)).